Here is a 325-residue protein sequence, read N- to C-terminus: Probable cell division protein WhiA (325 aa).

A DNA-binding region (H-T-H motif) is located at residues 273-306; it reads SLEELGALADPPLTKDAVAGRIRRLLALADKRAN.

This sequence belongs to the WhiA family.

In terms of biological role, involved in cell division and chromosome segregation. The polypeptide is Probable cell division protein WhiA (Frankia alni (strain DSM 45986 / CECT 9034 / ACN14a)).